The chain runs to 481 residues: Protein hedgehog (481 aa).

Residue C93 is the site of N-palmitoyl cysteine attachment. 7 residues coordinate Ca(2+): E157, E158, D163, T193, E194, D197, and D199. G265 carries the Cholesterol glycine ester lipid modification.

This sequence belongs to the hedgehog family. Interacts with shf. In terms of processing, the C-terminal part of the hedgehog protein precursor displays an autoproteolysis activity that results in the cleavage of the full-length protein into two parts (N-product and C-product). In addition, the C-terminal part displays a cholesterol transferase activity that results by the covalent attachment of a cholesterol moiety to the C-terminal of the newly generated N-product. The N-product is the active species in both local and long-range signaling, whereas the C-product has no signaling activity. Post-translationally, cholesterylation is required for N-product targeting to lipid rafts and multimerization. N-palmitoylation by Rasp of the hedgehog N-product, within the secretory pathway, is required for the embryonic and larval patterning activities of the hedgehog signal.

The protein localises to the nucleus. It is found in the cytoplasm. Its subcellular location is the cell membrane. The enzyme catalyses glycyl-L-cysteinyl-[protein] + cholesterol + H(+) = [protein]-C-terminal glycyl cholesterol ester + N-terminal L-cysteinyl-[protein]. Functionally, the C-terminal part of the hedgehog protein precursor displays an autoproteolysis activity that results in the cleavage of the full-length protein into two parts (N-product and C-product). In addition, the C-terminal part displays a cholesterol transferase activity that results by the covalent attachment of a cholesterol moiety to the C-terminal of the newly generated N-product. Once cleaved, the C-product has no signaling activity and diffuses from the cell. The dually lipidated hedgehog protein N-product is a morphogen which is essential for a variety of patterning events during development. Establishes the anterior-posterior axis of the embryonic segments and patterns the larval imaginal disks. Binds to the patched (ptc) receptor, which functions in association with smoothened (smo), to activate the transcription of target genes wingless (wg), decapentaplegic (dpp) and ptc. In the absence of hh, ptc represses the constitutive signaling activity of smo through fused (fu). Essential component of a signaling pathway which regulates the Duox-dependent gut immune response to bacterial uracil; required to activate Cad99C-dependent endosome formation, norpA-dependent Ca2+ mobilization and p38 MAPK, which are essential steps in the Duox-dependent production of reactive oxygen species (ROS) in response to intestinal bacterial infection. During photoreceptor differentiation, it up-regulates transcription of Ubr3, which in turn promotes the hh-signaling pathway by mediating the ubiquitination and degradation of cos. In Drosophila persimilis (Fruit fly), this protein is Protein hedgehog.